A 431-amino-acid polypeptide reads, in one-letter code: tRNA(Ile)-lysidine synthase (431 aa).

Residue 26 to 31 coordinates ATP; it reads SGGVDS.

This sequence belongs to the tRNA(Ile)-lysidine synthase family.

The protein localises to the cytoplasm. It carries out the reaction cytidine(34) in tRNA(Ile2) + L-lysine + ATP = lysidine(34) in tRNA(Ile2) + AMP + diphosphate + H(+). Ligates lysine onto the cytidine present at position 34 of the AUA codon-specific tRNA(Ile) that contains the anticodon CAU, in an ATP-dependent manner. Cytidine is converted to lysidine, thus changing the amino acid specificity of the tRNA from methionine to isoleucine. In Wolbachia pipientis wMel, this protein is tRNA(Ile)-lysidine synthase.